We begin with the raw amino-acid sequence, 1328 residues long: Peroxidasin homolog pxn-2 (1328 aa).

A signal peptide spans 1–16 (MLLEFLLLIGISLSTA). Positions 17-45 (CPSECRCAGLDVHCEGKNLTAIPGHIPIA) constitute an LRRNT domain. N-linked (GlcNAc...) asparagine glycosylation is present at Asn-34. 6 LRR repeats span residues 42–66 (IPIA…NFQA), 67–90 (LPNL…LLDS), 92–114 (PGLK…STAP), 116–137 (ALVS…LVSH), 138–161 (SPYM…FFNS), and 164–191 (VPTL…QFAD). Asn-77 is a glycosylation site (N-linked (GlcNAc...) asparagine). N-linked (GlcNAc...) asparagine glycosylation occurs at Asn-220. Positions 305–332 (KKMQASSSTEPPITTTTMEPMTTSTMDS) are disordered. Over residues 310–332 (SSSTEPPITTTTMEPMTTSTMDS) the composition is skewed to low complexity. Ig-like C2-type domains follow at residues 346–438 (PEID…FSVS) and 445–532 (PVII…ANLL). A disulfide bond links Cys-373 and Cys-422. Asn-403 and Asn-455 each carry an N-linked (GlcNAc...) asparagine glycan. Cys-466 and Cys-516 are disulfide-bonded. Asn-630 is a glycosylation site (N-linked (GlcNAc...) asparagine). A disulfide bridge connects residues Cys-660 and Cys-676. Heme b is bound at residue Asp-754. His-755 (proton acceptor) is an active-site residue. Asp-756 is a binding site for Ca(2+). 2 disulfide bridges follow: Cys-775-Cys-785 and Cys-779-Cys-807. N-linked (GlcNAc...) asparagine glycosylation occurs at Asn-776. Residues Thr-839, Tyr-841, Asp-843, and Ser-845 each contribute to the Ca(2+) site. Residue Asn-894 is glycosylated (N-linked (GlcNAc...) asparagine). Heme b-binding residues include Glu-913 and His-1008. One copy of the LRR 7 repeat lies at 1085–1109 (ALDLAALNIQRGRDHGLPSWTEYRK). Disulfide bonds link Cys-1111–Cys-1168 and Cys-1209–Cys-1236. 2 N-linked (GlcNAc...) asparagine glycosylation sites follow: Asn-1112 and Asn-1128. Residues 1204–1225 (LSKIICTNGDDIDRIQRDIFVY) form an LRR 8 repeat. A glycan (N-linked (GlcNAc...) asparagine) is linked at Asn-1228. The disordered stretch occupies residues 1266 to 1297 (IGGDEKAKRRKRRHHHSKKSCHDKGKRRKSGD). The span at 1273-1295 (KRRKRRHHHSKKSCHDKGKRRKS) shows a compositional bias: basic residues. An N-linked (GlcNAc...) asparagine glycan is attached at Asn-1300.

Belongs to the peroxidase family. XPO subfamily. Ca(2+) is required as a cofactor. It depends on heme b as a cofactor. In terms of tissue distribution, expressed in vulval muscles and in some neurons including PVQ. Expressed in the hypodermis and in coelomocytes.

The protein resides in the secreted. It is found in the extracellular space. It localises to the extracellular matrix. Its subcellular location is the basement membrane. It carries out the reaction L-lysyl-[collagen] + L-methionyl-[collagen] + H2O2 = [collagen]-L-lysyl-N-S-L-methionyl-[collagen] + 2 H2O + H(+). It catalyses the reaction bromide + H2O2 = hypobromite + H2O. The enzyme catalyses L-lysyl-[collagen] + L-methionyl-[collagen] + hypobromite = [collagen]-L-lysyl-N-S-L-methionyl-[collagen] + bromide + H2O + H(+). The catalysed reaction is L-tyrosyl-[protein] + bromide + H2O2 + H(+) = 3-bromo-L-tyrosyl-[protein] + 2 H2O. It carries out the reaction hypobromite + L-tyrosyl-[protein] + H(+) = 3-bromo-L-tyrosyl-[protein] + H2O. Its function is as follows. Catalyzes the two-electron oxidation of bromide by hydrogen peroxide and generates hypobromite as a reactive intermediate which mediates the formation of sulfilimine cross-links between methionine and hydroxylysine residues within an uncross-linked collagen IV/COL4A1 NC1 hexamer. Required for embryonic morphogenesis playing a role in epidermal elongation at the twofold stage of embryonic development. Required post-embryonically for basement membrane integrity and muscle-epidermal attachments, and specifically in the function of basement membrane components such as the type IV collagens. May have a role in inhibiting axon regeneration. May functionally antagonize the peroxidasin pxn-1. The chain is Peroxidasin homolog pxn-2 from Caenorhabditis elegans.